The primary structure comprises 296 residues: POM121-like protein 12 (296 aa).

2 disordered regions span residues 1–54 (MGAA…SPWP) and 142–162 (APPE…RPAG). Positions 34 to 52 (SRSPSTPQTTPSPQGRQSP) are enriched in low complexity.

It belongs to the POM121 family.

This Homo sapiens (Human) protein is POM121-like protein 12 (POM121L12).